We begin with the raw amino-acid sequence, 591 residues long: MHRYRTHTCGALRDSHIDQTVRLSGWCHRIRDHGGVLFIDLRDHYGLTQCVADPDSPAFKDAEKLRAEWVVRIDGKVRRRPEGTDNPDLPTGAVEVFVTEIEVLGPAGELPLPVFGEQEYPEDVRLRYRFLDLRREKLHQNIMTRGAIVDSMRRRMKEQGFFEFQTPILTASSPEGARDFLVPSRIHPGKFYALPQAPQQYKQLLMMSGFDRYFQIAPCFRDEDPRADRLPGEFYQLDVEMSFVTQDDIFAAMEPVITGVFEEFAKGKRVTKGWPRIAFADSMRKYGTDKPDLRNPIEMQDVSEHFRGSGFKVFARMLEEQRNQVWAIPGPGGGSRAFCDRMNSWAQGEGQPGLGYIMWREGGEGAGPLANNIGPERTEAIRAALGLKAGDAAFFVAGDPSKFVKFAGLARTKVGEELNLIDKDQFALAWVVDFPMYEYNEDDKKVDFSHNPFSMPQGGMEALTSQDPLTIKAFQYDITCNGYEIASGGIRNHRPEAMVKAFEIAGYGEQEVVDRFGGMYRAFQYGAPPHGGMAAGVDRIVMLLCGTTNLREISLFPMNQRAEDLLMGAPSEVSPKQLRELHIRLNLPDTK.

Residue E175 participates in L-aspartate binding. Residues 199–202 (QQYK) are aspartate. Residues R221 and H450 each coordinate L-aspartate. 221–223 (RDE) contacts ATP. E484 serves as a coordination point for ATP. R491 provides a ligand contact to L-aspartate. ATP is bound at residue 536 to 539 (GVDR).

It belongs to the class-II aminoacyl-tRNA synthetase family. Type 1 subfamily. In terms of assembly, homodimer.

The protein resides in the cytoplasm. It catalyses the reaction tRNA(Asx) + L-aspartate + ATP = L-aspartyl-tRNA(Asx) + AMP + diphosphate. In terms of biological role, aspartyl-tRNA synthetase with relaxed tRNA specificity since it is able to aspartylate not only its cognate tRNA(Asp) but also tRNA(Asn). Reaction proceeds in two steps: L-aspartate is first activated by ATP to form Asp-AMP and then transferred to the acceptor end of tRNA(Asp/Asn). The polypeptide is Aspartate--tRNA(Asp/Asn) ligase (Rhodopseudomonas palustris (strain ATCC BAA-98 / CGA009)).